Reading from the N-terminus, the 304-residue chain is DCN1-like protein 3 (304 aa).

Disordered stretches follow at residues 1–87 (MGQC…EESS) and 284–304 (EVEG…EEQT). A lipid anchor (N-myristoyl glycine) is attached at glycine 2. In terms of domain architecture, DCUN1 spans 86–278 (SSLQRLEELF…LFDTFVEWEM (193 aa)).

In terms of assembly, part of a complex containing DCUN1D3, CUL3 and RBX1. Interacts (via the DCUN1 domain) with the unneddylated cullins: interacts with CUL1, CUL2, CUL3, CUL4A, CUL4B and CUL5; these interactions promote the cullin neddylation and the identity of the cullin dictates the affinity of the interaction. Interacts preferentially with CUL3; this interaction triggers the relocalization of CUL3 to the cell membrane where CUL3 is neddylated. Interacts (via DCUN1 domain) with RBX1. May also interact with regulators or subunits of cullin-RING ligases such as RNF7, ELOB and DDB1; these interactions are bridged by cullins. Interacts (via DCUN1 domain) with CAND1; this interaction is bridged by cullins and strongly inhibits cullin neddylation. These CAND-cullin-DCNL complexes can only be neddylated in the presence of a substrate adapter. Interacts (via DCUN1 domain) with the N-terminally acetylated form of UBE2M and UBE2F. Highest levels of expression are in the testis. Very low levels of expression in the heart, brain, skeletal muscle, kidney, liver, spleen, lung and ovary.

Its subcellular location is the cell membrane. The protein resides in the cytoplasm. It is found in the nucleus. It localises to the perinuclear region. Functionally, contributes to the neddylation of all cullins by transferring NEDD8 from N-terminally acetylated NEDD8-conjugating E2s enzyme to different cullin C-terminal domain-RBX complexes and may play a role in the cell cycle progression by regulating the SCF ubiquitin E3 ligase complex, after UV damage. At the cell membrane, can promote and as well inhibit cullins neddylation. This chain is DCN1-like protein 3, found in Mus musculus (Mouse).